The sequence spans 299 residues: Somaliensene A/B synthase (299 aa).

7 consecutive transmembrane segments (helical) span residues 32 to 49 (WTTL…AVHT), 56 to 72 (TAVA…LFVY), 110 to 132 (IAVR…ALLW), 153 to 171 (LYAG…EIVA), 177 to 194 (AWRW…LMSV), 222 to 241 (VFLC…FLMA), and 247 to 269 (WWIV…RVVL).

This sequence belongs to the UbiA prenyltransferase family. The cofactor is Mg(2+).

The protein resides in the cell membrane. The enzyme catalyses (2E,6E,10E,14E)-geranylfarnesyl diphosphate = somaliensene A + diphosphate. It carries out the reaction (2E,6E,10E,14E)-geranylfarnesyl diphosphate = (-)-somaliensene B + diphosphate. It participates in secondary metabolite biosynthesis; terpenoid biosynthesis. Its function is as follows. Sesterterpene cyclase, which converts geranylfarnesyl diphosphate (GFPP) into the terpenes somaliensene A and somaliensene B. The polypeptide is Somaliensene A/B synthase (Streptomyces somaliensis (strain ATCC 33201 / DSM 40738 / JCM 12659 / KCTC 9044 / NCTC 11332 / NRRL B-12077 / IP 733)).